Here is a 136-residue protein sequence, read N- to C-terminus: Nucleoside diphosphate kinase (136 aa).

ATP contacts are provided by Lys-10, Phe-58, Arg-86, Thr-92, Arg-104, and Asn-114. His-117 (pros-phosphohistidine intermediate) is an active-site residue.

Belongs to the NDK family. Homotetramer. Requires Mg(2+) as cofactor.

The protein localises to the cytoplasm. It catalyses the reaction a 2'-deoxyribonucleoside 5'-diphosphate + ATP = a 2'-deoxyribonucleoside 5'-triphosphate + ADP. It carries out the reaction a ribonucleoside 5'-diphosphate + ATP = a ribonucleoside 5'-triphosphate + ADP. In terms of biological role, major role in the synthesis of nucleoside triphosphates other than ATP. The ATP gamma phosphate is transferred to the NDP beta phosphate via a ping-pong mechanism, using a phosphorylated active-site intermediate. This Mycobacterium marinum (strain ATCC BAA-535 / M) protein is Nucleoside diphosphate kinase.